The primary structure comprises 154 residues: Ribosomal RNA large subunit methyltransferase H (154 aa).

S-adenosyl-L-methionine-binding positions include Leu76, Gly103, and 122–127 (LSPLTL).

This sequence belongs to the RNA methyltransferase RlmH family. As to quaternary structure, homodimer.

Its subcellular location is the cytoplasm. It catalyses the reaction pseudouridine(1915) in 23S rRNA + S-adenosyl-L-methionine = N(3)-methylpseudouridine(1915) in 23S rRNA + S-adenosyl-L-homocysteine + H(+). Specifically methylates the pseudouridine at position 1915 (m3Psi1915) in 23S rRNA. The sequence is that of Ribosomal RNA large subunit methyltransferase H from Wolinella succinogenes (strain ATCC 29543 / DSM 1740 / CCUG 13145 / JCM 31913 / LMG 7466 / NCTC 11488 / FDC 602W) (Vibrio succinogenes).